Consider the following 456-residue polypeptide: NADPH-ferredoxin reductase FprA (456 aa).

Positions 17, 43, 51, and 87 each coordinate FAD. NADP(+) contacts are provided by residues arginine 113, 158-161, 202-203, and glutamate 214; these read NGNV and RR. FAD-binding positions include tryptophan 362 and 369–371; that span reads GVI. Glycine 369 is a binding site for NADP(+).

Belongs to the ferredoxin--NADP reductase type 1 family. As to quaternary structure, monomer. Requires FAD as cofactor.

It catalyses the reaction 2 reduced [2Fe-2S]-[ferredoxin] + NADP(+) + H(+) = 2 oxidized [2Fe-2S]-[ferredoxin] + NADPH. May serve as electron transfer protein and supply electrons to P450 systems. This Mycobacterium leprae (strain TN) protein is NADPH-ferredoxin reductase FprA (fprA).